The following is a 66-amino-acid chain: Large ribosomal subunit protein bL35 (66 aa).

This sequence belongs to the bacterial ribosomal protein bL35 family.

This is Large ribosomal subunit protein bL35 from Borreliella afzelii (strain PKo) (Borrelia afzelii).